Reading from the N-terminus, the 583-residue chain is Thiol:disulfide interchange protein DsbD (583 aa).

The signal sequence occupies residues M1–A20. Disulfide bonds link C123-C128 and C200-C322. Transmembrane regions (helical) follow at residues I185 to L205, L237 to L257, P261 to F281, G302 to C322, G344 to F364, W375 to L395, P405 to T425, and V433 to W453. Positions T440–L583 constitute a Thioredoxin domain. C500 and C503 are joined by a disulfide.

Belongs to the thioredoxin family. DsbD subfamily.

The protein resides in the cell inner membrane. The catalysed reaction is [protein]-dithiol + NAD(+) = [protein]-disulfide + NADH + H(+). It catalyses the reaction [protein]-dithiol + NADP(+) = [protein]-disulfide + NADPH + H(+). In terms of biological role, required to facilitate the formation of correct disulfide bonds in some periplasmic proteins and for the assembly of the periplasmic c-type cytochromes. Acts by transferring electrons from cytoplasmic thioredoxin to the periplasm. This transfer involves a cascade of disulfide bond formation and reduction steps. The polypeptide is Thiol:disulfide interchange protein DsbD (Actinobacillus pleuropneumoniae serotype 5b (strain L20)).